The chain runs to 583 residues: L-galactono-1,4-lactone dehydrogenase 2, mitochondrial (583 aa).

The N-terminal 36 residues, 1 to 36, are a transit peptide targeting the mitochondrion; sequence MRRLLLAGILRRASSSPSSHHHLHLVRALSASSPLP. Positions 37–78 are cleaved as a propeptide — removed in mature form; that stretch reads ASDADLRKYAGYALLLLGCGAATYYSFPLPPDALHKKAVPFK. Residues 45 to 61 form a helical membrane-spanning segment; the sequence is YAGYALLLLGCGAATYY. Positions 95–266 constitute an FAD-binding PCMH-type domain; that stretch reads THEVHTRVLL…AEVTLQCVER (172 aa).

It depends on FAD as a cofactor.

The protein localises to the mitochondrion membrane. The enzyme catalyses L-galactono-1,4-lactone + 4 Fe(III)-[cytochrome c] = L-dehydroascorbate + 4 Fe(II)-[cytochrome c] + 5 H(+). It participates in cofactor biosynthesis; L-ascorbate biosynthesis. In terms of biological role, involved in the biosynthesis of ascorbic acid. The protein is L-galactono-1,4-lactone dehydrogenase 2, mitochondrial (GLDH2) of Oryza sativa subsp. japonica (Rice).